The primary structure comprises 205 residues: Ferritin heavy chain (205 aa).

An N-terminal signal peptide occupies residues 1–19 (MVKLIASLLLLAVVAQAYG). Residues 35–190 (VDMKDACIKG…GKLTTLKKMM (156 aa)) enclose the Ferritin-like diiron domain. The cysteines at positions 41 and 150 are disulfide-linked. Fe cation-binding residues include glutamate 52, glutamate 87, histidine 90, glutamate 136, and glutamine 172.

Belongs to the ferritin family. Oligomer of 12 light (L) chains and 12 heavy (H) chains; L and H chains are disulfide-linked. The functional molecule forms a roughly spherical shell with a diameter of 12 nm and contains a central cavity into which the insoluble ferric iron core is deposited. As to expression, expressed in hemolymph and gut (at protein level). Expressed in the head (at protein level). Expressed in thorax and abdomen.

Its subcellular location is the golgi apparatus. The protein localises to the secreted. The enzyme catalyses 4 Fe(2+) + O2 + 4 H(+) = 4 Fe(3+) + 2 H2O. Stores iron in a soluble, non-toxic, readily available form. Important for iron homeostasis. Iron is taken up in the ferrous form and deposited as ferric hydroxides after oxidation. Ferritin is composed of a heavy (H) chain which is responsible for the oxidation and uptake of ferrous iron, and a light (L) chain which facilitates the nucleation of the ferrihydrite iron core. Required for dietary iron absorption in the midgut. Involved in tissue iron detoxification by exporting excess iron. Functions as an antioxidant and protects the developing organs from cell-mediated ferroptosis. Required for embryo and larval development. Plays a role in blood cell (haemocyte) differentiation in the lymph gland at the larval stage. May also store Zn(2+) and Mn(2+) and thus may play a role in zinc and manganese homeostasis. In Drosophila melanogaster (Fruit fly), this protein is Ferritin heavy chain.